A 200-amino-acid chain; its full sequence is Large ribosomal subunit protein uL4 (200 aa).

Positions 38–80 are disordered; it reads GRQGSKQQKTRSDVSGGGKRPWRQKGTGRARAGTTRGPIWRGG.

It belongs to the universal ribosomal protein uL4 family. In terms of assembly, part of the 50S ribosomal subunit.

In terms of biological role, one of the primary rRNA binding proteins, this protein initially binds near the 5'-end of the 23S rRNA. It is important during the early stages of 50S assembly. It makes multiple contacts with different domains of the 23S rRNA in the assembled 50S subunit and ribosome. Forms part of the polypeptide exit tunnel. The chain is Large ribosomal subunit protein uL4 from Stutzerimonas stutzeri (strain A1501) (Pseudomonas stutzeri).